Here is a 612-residue protein sequence, read N- to C-terminus: Breast cancer type 1 susceptibility protein homolog (612 aa).

The segment at 21-61 (CGICCSTYKDPILSTCFHIFCRSCINACFERKRKVQCPICR) adopts an RING-type zinc-finger fold. The interval 140 to 173 (RRKRPSRPQPPSAFAEEPAEPVEPPEPATKQPVE) is disordered. 2 BRCT domains span residues 415–477 (RFAE…DYTI) and 505–603 (EHGK…PYKA).

As to quaternary structure, heterodimer (via RING-type zinc finger) with brd-1 to form the core CeBCD complex. Brc-1-brd-1 heterodimer-containing CeBCD complexes bound to chromatin are activated as an E3-ubiquitin ligase in response to DNA damage. The heterodimer interacts with the recombinase rad-51 following ionizing irradiation; the interaction is direct. The heterodimer interacts the E2-ubiquitin-conjugating enzyme let-70 following ionizing irradiation. The heterodimer interacts with the pro-crossover proteins msh-5 and syp-3. In terms of processing, phosphorylation of CeBCD complexes is required for E3 ubiquitin-protein ligase activity.

The protein localises to the nucleus. It is found in the chromosome. The protein resides in the cytoplasm. It carries out the reaction S-ubiquitinyl-[E2 ubiquitin-conjugating enzyme]-L-cysteine + [acceptor protein]-L-lysine = [E2 ubiquitin-conjugating enzyme]-L-cysteine + N(6)-ubiquitinyl-[acceptor protein]-L-lysine.. Its pathway is protein modification; protein ubiquitination. With respect to regulation, E3 ubiquitin-protein ligase activity of CeBCD complexes occurs at DNA damage sites. Following DNA damage, E3 ubiquitin-protein ligase activity is reduced by caffeine treatment (inhibitor of ATM and ATK kinase activity). In terms of biological role, E3 ubiquitin-protein ligase that specifically mediates the formation of polyubiquitin chains and plays a central role in DNA repair. Plays a role in triggering cellular responses at damage sites in response to DNA damage that may be induced by UV and ionizing radiation for example. Functions in double-strand break repair, and is required for homologous recombination between sister chromatids in meiotic and mitotic cells. In particular, protects against chromosome non-disjunction and nuclear fragmentation during meiotic double-strand break repair to ensure sister chromatid recombination and aid chromosome stability. Required for normal cell cycle progression. Along with brap-2 modulates the expression of cell cycle arrest protein cki-1 in response to increased levels of reactive oxygen species. Constituent of the CeBCD complex that possesses E3 ubiquitin-protein ligase activity. When bound to chromatin, the brc-1-brd-1 heterodimer within the CeBCD complex is inactive during normal conditions, but in response to DNA damage, the brc-1-brd-1 heterodimer associates with other proteins such as the recombinase rad-51 or the E2-ubiquitin-conjugating enzyme let-70, which activate the CeBCD complex as an E3-ubiquitin ligase. Moreover, association between the brc-1-brd-1 heterodimer and rad-51 and let-70, probably requires DNA checkpoint proteins such as atl-1 and mre-11 in order to induce ubiquitination at DNA damage sites. To this end, the brc-1-brd-1 heterodimer coordinates a diverse range of cellular pathways such as DNA damage repair, ubiquitination and transcriptional regulation to maintain genomic stability. In Caenorhabditis elegans, this protein is Breast cancer type 1 susceptibility protein homolog.